Reading from the N-terminus, the 469-residue chain is Relaxin-3 receptor 1 (469 aa).

Topologically, residues 1–81 (MQMADAATIA…ESADTEARVR (81 aa)) are extracellular. 2 N-linked (GlcNAc...) asparagine glycosylation sites follow: N36 and N40. The chain crosses the membrane as a helical span at residues 82 to 102 (ILISVVYWVVCALGLAGNLLV). Residues 103-119 (LYLMKSMQGWRKSSINL) lie on the Cytoplasmic side of the membrane. The chain crosses the membrane as a helical span at residues 120-140 (FVTNLALTDFQFVLTLPFWAV). The Extracellular segment spans residues 141 to 156 (ENALDFKWPFGKAMCK). Residues C155 and C247 are joined by a disulfide bond. The helical transmembrane segment at 157–177 (IVSMVTSMNMYASVFFLTAMS) threads the bilayer. The Cytoplasmic segment spans residues 178 to 215 (VTRYHSVASALKSHRTRGHGRGDCCGRSLGDSCCFSAK). A helical transmembrane segment spans residues 216 to 236 (ALCVWIWALAALASLPSAIFS). At 237–270 (TTVKVMGEELCLVRFPDKLLGRDRQFWLGLYHSQ) the chain is on the extracellular side. The helical transmembrane segment at 271-291 (KVLLGFVLPLGIIILCYLLLV) threads the bilayer. The Cytoplasmic portion of the chain corresponds to 292–329 (RFIADRRAAGTKGGAAVAGGRPTGASARRLSKVTKSVT). The chain crosses the membrane as a helical span at residues 330-350 (IVVLSFFLCWLPNQALTTWSI). The Extracellular segment spans residues 351–356 (LIKFNA). A helical membrane pass occupies residues 357–377 (VPFSQEYFLCQVYAFPVSVCL). Over 378 to 469 (AHSNSCLNPV…YDLLPSSSAY (92 aa)) the chain is Cytoplasmic.

The protein belongs to the G-protein coupled receptor 1 family. In terms of tissue distribution, expressed predominantly in brain regions. Highest expression in substantia nigra and pituitary, followed by hippocampus, spinal cord, amygdala, caudate nucleus and corpus callosum, quite low level in cerebellum. In peripheral tissues, relatively high levels in adrenal glands, low levels in pancreas, salivary gland, placenta, mammary gland and testis.

Its subcellular location is the cell membrane. Receptor for RNL3/relaxin-3. Binding of the ligand inhibit cAMP accumulation. The polypeptide is Relaxin-3 receptor 1 (RXFP3) (Homo sapiens (Human)).